The sequence spans 141 residues: Cholinesterase (141 aa).

The N-linked (GlcNAc...) asparagine glycan is linked to N39. 49 to 50 (GG) contacts substrate. The Acyl-ester intermediate role is filled by S131. S131 is modified (phosphoserine).

This sequence belongs to the type-B carboxylesterase/lipase family. As to quaternary structure, homotetramer; disulfide-linked. Dimer of dimers. In terms of tissue distribution, present in most cells except erythrocytes.

The protein resides in the secreted. The catalysed reaction is an acylcholine + H2O = a carboxylate + choline + H(+). Functionally, esterase with broad substrate specificity. Contributes to the inactivation of the neurotransmitter acetylcholine. Can degrade neurotoxic organophosphate esters. The polypeptide is Cholinesterase (BCHE) (Canis lupus familiaris (Dog)).